We begin with the raw amino-acid sequence, 315 residues long: MSAEAVKKLSFEIAPSEEESEATIEQQDVACGLENLPVSLWPLGAGPRPKPFQYTPDHVAGPGVDMDPTQITFPGCACIKTPCVPGTCSCLRHESNYNDNLCLRDVGSEAKYAKPVFECNVLCQCGEHCRNRVVQSGLQFLLQVFQTEKKGWGLRTLEYIPKGRFVCEYAGEVLGFSEVQRRIHLQTAHDPNYIIALREHTYNGQVMETFVDPTYIGNIGRFLNHSCEPNLLMIPVRIDSMVPKLALFAAKDILPGEELSYDYSGRFLNQISSKDKERIDCGQPRKPCYCGAQSCATFLPYDSSLYGPLENPGTS.

One can recognise a Pre-SET domain in the interval 74 to 137 (PGCACIKTPC…HCRNRVVQSG (64 aa)). 9 residues coordinate Zn(2+): C76, C78, C83, C88, C90, C119, C123, C125, and C129. The SET domain maps to 140-264 (FLLQVFQTEK…PGEELSYDYS (125 aa)). S-adenosyl-L-methionine-binding positions include 150 to 152 (KGW), Y193, R221, and 224 to 225 (NH). Zn(2+) is bound by residues C227, C288, C290, and C295. In terms of domain architecture, Post-SET spans 284-300 (PRKPCYCGAQSCATFLP).

Belongs to the class V-like SAM-binding methyltransferase superfamily.

The protein localises to the nucleus. It localises to the chromosome. It carries out the reaction L-lysyl(36)-[histone H3] + 2 S-adenosyl-L-methionine = N(6),N(6)-dimethyl-L-lysyl(36)-[histone H3] + 2 S-adenosyl-L-homocysteine + 2 H(+). In terms of biological role, histone methyltransferase that methylates 'Lys-4' and 'Lys-36' of histone H3, 2 specific tags for epigenetic transcriptional activation. Specifically mediates dimethylation of H3 'Lys-36'. This Rattus norvegicus (Rat) protein is Histone-lysine N-methyltransferase SETMAR.